Reading from the N-terminus, the 413-residue chain is Phosphopentomutase (413 aa).

Asp-11, Asp-306, His-311, Asp-347, His-348, and His-359 together coordinate Mn(2+).

The protein belongs to the phosphopentomutase family. Mn(2+) is required as a cofactor.

The protein resides in the cytoplasm. It carries out the reaction 2-deoxy-alpha-D-ribose 1-phosphate = 2-deoxy-D-ribose 5-phosphate. The enzyme catalyses alpha-D-ribose 1-phosphate = D-ribose 5-phosphate. It functions in the pathway carbohydrate degradation; 2-deoxy-D-ribose 1-phosphate degradation; D-glyceraldehyde 3-phosphate and acetaldehyde from 2-deoxy-alpha-D-ribose 1-phosphate: step 1/2. In terms of biological role, isomerase that catalyzes the conversion of deoxy-ribose 1-phosphate (dRib-1-P) and ribose 1-phosphate (Rib-1-P) to deoxy-ribose 5-phosphate (dRib-5-P) and ribose 5-phosphate (Rib-5-P), respectively. This Helicobacter pylori (strain J99 / ATCC 700824) (Campylobacter pylori J99) protein is Phosphopentomutase.